We begin with the raw amino-acid sequence, 879 residues long: Band 4.1-like protein 1 (879 aa).

Residues 1–64 (MTTETGPDSE…RPAEQSLDME (64 aa)) are disordered. A compositionally biased stretch (low complexity) spans 17 to 35 (ETPQQPEAAAAVTTPVTPA). Thr-30 is modified (phosphothreonine). Residues 38–50 (SHPETNSNEKHLT) show a composition bias toward basic and acidic residues. Ser-75 bears the Phosphoserine mark. A Phosphothreonine modification is found at Thr-79. The region spanning 97 to 378 (ATCRVTLLDA…EHHTFFRLVS (282 aa)) is the FERM domain. A Phosphotyrosine modification is found at Tyr-343. Ser-378, Ser-430, Ser-437, Ser-461, and Ser-466 each carry phosphoserine. Residues 428–501 (SRSLDGAEFS…HKQEFLDKPE (74 aa)) form a disordered region. A compositionally biased stretch (basic and acidic residues) spans 444 to 501 (ENHDAGPDGDKREDDAESGGRRSEAEEGEVRTPTKIKELKPEQETTPRHKQEFLDKPE). At Thr-475 the chain carries Phosphothreonine. The spectrin--actin-binding stretch occupies residues 483-541 (KPEQETTPRHKQEFLDKPEDVLLKHQASINELKRTLKEPNSKLIHRDRDWERERRLPSS). Ser-510 carries the post-translational modification Phosphoserine. The span at 514 to 538 (LKRTLKEPNSKLIHRDRDWERERRL) shows a compositional bias: basic and acidic residues. 3 disordered regions span residues 514–596 (LKRT…FLKD), 633–687 (FEDF…STPE), and 718–742 (SRVSTADSTQVDGGAPAAKDFMTTP). Phosphoserine is present on residues Ser-540, Ser-541, Ser-544, and Ser-546. The residue at position 550 (Thr-550) is a Phosphothreonine. The span at 550-577 (TPEKASERAGLREGSEEKVKPPRPRAPE) shows a compositional bias: basic and acidic residues. A phosphoserine mark is found at Ser-564 and Ser-578. Thr-580 carries the post-translational modification Phosphothreonine. 11 positions are modified to phosphoserine: Glu-583, Gln-587, Ser-639, Ser-648, Ser-650, Ser-665, Ser-666, Asp-669, Ser-671, Ser-677, and Ser-684. Residues 635–650 (DFSRSLPELDRDKSDS) show a composition bias toward basic and acidic residues. Thr-685 carries the phosphothreonine modification. The segment covering 718 to 728 (SRVSTADSTQV) has biased composition (polar residues). 5 positions are modified to phosphoserine: Ser-721, Pro-742, Ala-766, Ser-782, and Ser-868. The segment at 744–879 (CITTETISTT…EERDKKPQES (136 aa)) is C-terminal (CTD).

In terms of assembly, interacts with AGAP2. Highest expression in brain, lower in heart and kidney. Within the brain, highest expression in cerebellum.

Its subcellular location is the cytoplasm. It localises to the cytoskeleton. In terms of biological role, may function to confer stability and plasticity to neuronal membrane via multiple interactions, including the spectrin-actin-based cytoskeleton, integral membrane channels and membrane-associated guanylate kinases. In Rattus norvegicus (Rat), this protein is Band 4.1-like protein 1.